A 158-amino-acid polypeptide reads, in one-letter code: Transcription elongation factor GreA (158 aa).

Positions 14 to 76 (VKKLEEELEY…QIENMLKNAN (63 aa)) form a coiled coil.

The protein belongs to the GreA/GreB family.

In terms of biological role, necessary for efficient RNA polymerase transcription elongation past template-encoded arresting sites. The arresting sites in DNA have the property of trapping a certain fraction of elongating RNA polymerases that pass through, resulting in locked ternary complexes. Cleavage of the nascent transcript by cleavage factors such as GreA or GreB allows the resumption of elongation from the new 3'terminus. GreA releases sequences of 2 to 3 nucleotides. The protein is Transcription elongation factor GreA of Clostridium acetobutylicum (strain ATCC 824 / DSM 792 / JCM 1419 / IAM 19013 / LMG 5710 / NBRC 13948 / NRRL B-527 / VKM B-1787 / 2291 / W).